The following is a 312-amino-acid chain: Fasciclin-like arabinogalactan protein elcF (312 aa).

A signal peptide spans 1–16 (MKLFTLLLPALTSAHS). FAS1 domains lie at 17 to 160 (LSTL…NASM) and 162 to 289 (LPHN…DKVL). N-linked (GlcNAc...) asparagine glycans are attached at residues Asn48, Asn68, Asn113, Asn157, and Asn165.

It belongs to the fasciclin-like AGP family.

It functions in the pathway secondary metabolite biosynthesis. In terms of biological role, fasciclin-like arabinogalactan protein; part of the gene cluster that mediates the biosynthesis of elsinochrome C, a perelyenequinone phytotoxin structurally similar to cercosporin. The first step of elsinochrome C biosynthesis is performed by the polyketide synthase elcA which catalyzes the formation of nor-toralactone. The starter unit acyltransferase (SAT) domain of elcA initiates polyketide extension by the selective utilization of acetyl-CoA, which is elongated to the heptaketide in the beta-ketoacyl synthase (KS) domain by successive condensations with six malonyl units introduced by the malonyl acyltransferase (MAT) domain. The product template (PT) domain catalyzes C4-C9 and C2-C11 aldol cyclizations and dehydrations to a trihydroxynaphthalene, which is thought to be delivered to the thioesterase (TE) domain for product release. The bifunctional enzyme elcB then methylates nor-toralactone to toralactone before conducting an unusual oxidative aromatic ring opening. The next step in perylenequinone biosynthesis is an O-methylation at the nascent OH-6 of the elcB product performed by the O-methyltransferase elcD. The oxidative coupling of the two monomeric naphthol units in perylenequinone biosynthesis is catalyzed by the FAD-dependent monooxygenase elcE and the multicopper oxidase elcG. ElcG might catalyze the first intermolecular coupling in a regio- and stereo-selective manner via a phenol radical coupling mechanism and the elcE could forge the second C-C bond intramolecularly via a hydride transfer mechanism. The fasciclin domain-containing protein elcF might also play a role duting this step. The last piece of the puzzle in the biosynthesis of elsinochrome C is the additional annulation by enolate coupling to afford the dihydrobenzo(ghi)perylenequinone system, catalyzed by the FAD-dependent monooxygenase elcH. The chain is Fasciclin-like arabinogalactan protein elcF from Phaeosphaeria nodorum (strain SN15 / ATCC MYA-4574 / FGSC 10173) (Glume blotch fungus).